A 70-amino-acid polypeptide reads, in one-letter code: U2-agatoxin-Ao1j (70 aa).

The signal sequence occupies residues 1-20 (MRAIISLLLISAMVFSMIAA). Residues 21-34 (VPEEEGLQLSEDER) constitute a propeptide that is removed on maturation. 3 cysteine pairs are disulfide-bonded: C37/C53, C44/C58, and C52/C68. At L69 the chain carries Leucine amide.

Belongs to the neurotoxin 01 (U2-agtx) family. As to expression, expressed by the venom gland.

It is found in the secreted. Insect active toxin causing rapid but reversible paralysis in crickets. No activity shown in mammals. Does not show effect on mammalian voltage-gated calcium channels. This chain is U2-agatoxin-Ao1j, found in Agelena orientalis (Funnel-web spider).